The sequence spans 508 residues: Acetyl-coenzyme A carboxylase carboxyl transferase subunit beta, chloroplastic (508 aa).

2 disordered regions span residues 30–51 and 173–234; these read PIENASESKDPNRNDTDKNIQG and NSSN…SSTH. A compositionally biased stretch (basic and acidic residues) spans 35-47; it reads SESKDPNRNDTDK. Residues 173 to 219 show a composition bias toward low complexity; sequence NSSNNNSSNENSSNENSSNENSSNENSSNDYISSSISSQSENSSQNE. Over residues 220–234 the composition is skewed to polar residues; sequence DITTSDQTIPESSTH. One can recognise a CoA carboxyltransferase N-terminal domain in the interval 244–508; it reads LWVQCENCYG…LHTFFPLNQN (265 aa). Zn(2+)-binding residues include C248, C251, C267, and C270. The C4-type zinc finger occupies 248–270; it reads CENCYGLNYKKFFKSKMHLCEQC.

This sequence belongs to the AccD/PCCB family. As to quaternary structure, acetyl-CoA carboxylase is a heterohexamer composed of biotin carboxyl carrier protein, biotin carboxylase and 2 subunits each of ACCase subunit alpha and ACCase plastid-coded subunit beta (accD). Zn(2+) is required as a cofactor.

The protein localises to the plastid. It localises to the chloroplast stroma. The catalysed reaction is N(6)-carboxybiotinyl-L-lysyl-[protein] + acetyl-CoA = N(6)-biotinyl-L-lysyl-[protein] + malonyl-CoA. The protein operates within lipid metabolism; malonyl-CoA biosynthesis; malonyl-CoA from acetyl-CoA: step 1/1. Component of the acetyl coenzyme A carboxylase (ACC) complex. Biotin carboxylase (BC) catalyzes the carboxylation of biotin on its carrier protein (BCCP) and then the CO(2) group is transferred by the transcarboxylase to acetyl-CoA to form malonyl-CoA. The chain is Acetyl-coenzyme A carboxylase carboxyl transferase subunit beta, chloroplastic from Lactuca sativa (Garden lettuce).